The chain runs to 260 residues: Triosephosphate isomerase (260 aa).

Substrate is bound at residue N11 to K13. Residue H103 is the Electrophile of the active site. E175 serves as the catalytic Proton acceptor. Residues G181, S220, and G241–G242 contribute to the substrate site.

The protein belongs to the triosephosphate isomerase family. In terms of assembly, homodimer.

It localises to the cytoplasm. It carries out the reaction D-glyceraldehyde 3-phosphate = dihydroxyacetone phosphate. It participates in carbohydrate biosynthesis; gluconeogenesis. Its pathway is carbohydrate degradation; glycolysis; D-glyceraldehyde 3-phosphate from glycerone phosphate: step 1/1. Involved in the gluconeogenesis. Catalyzes stereospecifically the conversion of dihydroxyacetone phosphate (DHAP) to D-glyceraldehyde-3-phosphate (G3P). The protein is Triosephosphate isomerase of Shewanella piezotolerans (strain WP3 / JCM 13877).